Reading from the N-terminus, the 335-residue chain is Glyceraldehyde-3-phosphate dehydrogenase (335 aa).

NAD(+)-binding positions include 12 to 13 (RI), aspartate 34, and lysine 79. D-glyceraldehyde 3-phosphate-binding positions include 150–152 (SCT), threonine 181, 210–211 (TG), and arginine 233. Catalysis depends on cysteine 151, which acts as the Nucleophile. Asparagine 315 is an NAD(+) binding site.

The protein belongs to the glyceraldehyde-3-phosphate dehydrogenase family. In terms of assembly, homotetramer.

The protein resides in the cytoplasm. It carries out the reaction D-glyceraldehyde 3-phosphate + phosphate + NAD(+) = (2R)-3-phospho-glyceroyl phosphate + NADH + H(+). It participates in carbohydrate degradation; glycolysis; pyruvate from D-glyceraldehyde 3-phosphate: step 1/5. The polypeptide is Glyceraldehyde-3-phosphate dehydrogenase (GPD) (Debaryomyces hansenii (strain ATCC 36239 / CBS 767 / BCRC 21394 / JCM 1990 / NBRC 0083 / IGC 2968) (Yeast)).